Reading from the N-terminus, the 379-residue chain is Alanine racemase (379 aa).

The active-site Proton acceptor; specific for D-alanine is lysine 37. Residue lysine 37 is modified to N6-(pyridoxal phosphate)lysine. Arginine 139 is a binding site for substrate. Tyrosine 266 (proton acceptor; specific for L-alanine) is an active-site residue. Substrate is bound at residue methionine 314.

This sequence belongs to the alanine racemase family. Requires pyridoxal 5'-phosphate as cofactor.

It carries out the reaction L-alanine = D-alanine. It participates in amino-acid biosynthesis; D-alanine biosynthesis; D-alanine from L-alanine: step 1/1. Catalyzes the interconversion of L-alanine and D-alanine. May also act on other amino acids. The sequence is that of Alanine racemase (alr) from Sorangium cellulosum (strain So ce56) (Polyangium cellulosum (strain So ce56)).